The primary structure comprises 520 residues: Biotinidase (520 aa).

Positions 1-21 (MSGARTAPALFFLGCSALALG) are cleaved as a signal peptide. Positions 49–333 (NPLELVSRQE…TGNTTSEMDP (285 aa)) constitute a CN hydrolase domain. Glu-89 functions as the Proton acceptor in the catalytic mechanism. N-linked (GlcNAc...) asparagine glycans are attached at residues Asn-96, Asn-127, and Asn-180. Lys-189 serves as the catalytic Proton donor. Cys-222 acts as the Nucleophile in catalysis. 3 N-linked (GlcNAc...) asparagine glycosylation sites follow: Asn-326, Asn-379, and Asn-466.

It belongs to the carbon-nitrogen hydrolase superfamily. BTD/VNN family.

The protein localises to the secreted. The protein resides in the extracellular space. It carries out the reaction biocytin + H2O = biotin + L-lysine. The catalysed reaction is biotin amide + H2O = biotin + NH4(+). Its function is as follows. Catalytic release of biotin from biocytin, the product of biotin-dependent carboxylases degradation. This is Biotinidase (Btd) from Mus musculus (Mouse).